We begin with the raw amino-acid sequence, 538 residues long: Poly [ADP-ribose] polymerase 2 (538 aa).

In terms of domain architecture, WGR spans 1-94 (MSIINDENGR…RDDEPVPNKY (94 aa)). Residues 104 to 133 (RQTEKEVKKEEPEPEPKVDEKNTRGRKKRG) are disordered. Over residues 105–126 (QTEKEVKKEEPEPEPKVDEKNT) the composition is skewed to basic and acidic residues. The region spanning 148-285 (VEEVNEKLKE…GSIEASLELK (138 aa)) is the PARP alpha-helical domain. One can recognise a PARP catalytic domain in the interval 309 to 535 (EPVSEEIAGK…VKVDRLTAKE (227 aa)). Residues 357-381 (QEVPKKRGRKSTKTAAPTVPPPTTK) are disordered.

It belongs to the ARTD/PARP family.

The protein resides in the nucleus. The catalysed reaction is NAD(+) + (ADP-D-ribosyl)n-acceptor = nicotinamide + (ADP-D-ribosyl)n+1-acceptor + H(+).. It catalyses the reaction L-aspartyl-[protein] + NAD(+) = 4-O-(ADP-D-ribosyl)-L-aspartyl-[protein] + nicotinamide. The enzyme catalyses L-glutamyl-[protein] + NAD(+) = 5-O-(ADP-D-ribosyl)-L-glutamyl-[protein] + nicotinamide. Inhibited by N-(6-oxo-5,6-dihydrophenanthridin-2-yl)-N,N-dimethylacetamide HCl (PJ34), 1,5-dihydroxyisoquinoline (DHQ) and 3-aminobenzamide (3AB). Its function is as follows. Poly[ADP-ribose] polymerase modifies various nuclear proteins by poly(ADP-ribosyl)ation, a post-translational modification synthesized after DNA damage that appears as an obligatory step in a detection/signaling pathway leading to the reparation of DNA strand breaks and programmed cell death. The chain is Poly [ADP-ribose] polymerase 2 from Caenorhabditis elegans.